A 489-amino-acid polypeptide reads, in one-letter code: Protein SIP5 (489 aa).

Positions 1-84 (MGNVPGKIDQ…RKTSREKELA (84 aa)) are disordered. Residue Ser13 is modified to Phosphoserine. Composition is skewed to polar residues over residues 21 to 32 (SSYNTTSSNSVI) and 51 to 69 (LVNN…GSHL). Phosphothreonine is present on residues Thr183 and Thr433. Residues 419-489 (SNRLIDPSHS…SKNRNTSLRP (71 aa)) form a disordered region. Ser436 is subject to Phosphoserine. A Phosphothreonine modification is found at Thr438. Basic and acidic residues predominate over residues 461 to 477 (QMVREAIRLSLEDQDNR).

It belongs to the SIP5 family. In terms of assembly, interacts with NPA1, SNF1 and REG1.

Its subcellular location is the cytoplasm. May negatively regulate the SNF1 kinase by promoting the interaction of the REG1/GLC7 phosphatase complex with the kinase. Deletion of SIP5 promotes resistance to artemisinin, which is probably an indirect effect of an action on the electron transport chain. In Saccharomyces cerevisiae (strain ATCC 204508 / S288c) (Baker's yeast), this protein is Protein SIP5 (SIP5).